The following is a 34-amino-acid chain: Phalloidin proprotein (34 aa).

A propeptide spanning residues 1 to 10 (MSDINASRLP) is cleaved from the precursor. A cross-link (cyclopeptide (Ala-Pro)) is located at residues 11–17 (AWLATCP). The segment at residues 12 to 16 (WLATC) is a cross-link (2'-cysteinyl-6'-hydroxytryptophan sulfoxide (Trp-Cys)). The propeptide occupies 18–34 (CVGDDVNPTLSRGESLC).

It belongs to the MSDIN fungal toxin family. Processed by the macrocyclase-peptidase enzyme POPB to yield a toxic cyclic heptapeptide. POPB first removes 10 residues from the N-terminus. Conformational trapping of the remaining peptide forces the enzyme to release this intermediate rather than proceed to macrocyclization. The enzyme rebinds the remaining peptide in a different conformation and catalyzes macrocyclization of the N-terminal 7 residues.

In terms of biological role, toxin that belongs to the bicyclic heptapeptides called phallotoxins. Although structurally related to amatoxins, phallotoxins have a different mode of action, which is the stabilization of F-actin. Phallotoxins are poisonous when administered parenterally, but not orally because of poor absorption. This chain is Phalloidin proprotein, found in Amanita phalloides (Death cap).